The primary structure comprises 366 residues: Acetylserotonin O-methyltransferase 2 (366 aa).

4 residues coordinate S-adenosyl-L-homocysteine: Gly209, Asp232, Asp253, and Lys267. The active-site Proton acceptor is His271. Residues Glu302 and Glu332 contribute to the active site.

Belongs to the class I-like SAM-binding methyltransferase superfamily. Cation-independent O-methyltransferase family. Homodimer. Expressed in roots, leaves, stems and flowers.

The protein resides in the cytoplasm. The enzyme catalyses N-acetylserotonin + S-adenosyl-L-methionine = melatonin + S-adenosyl-L-homocysteine + H(+). The protein operates within aromatic compound metabolism; melatonin biosynthesis; melatonin from serotonin: step 1/2. Its function is as follows. Methyltransferase which catalyzes the transfer of a methyl group onto N-acetylserotonin, producing melatonin (N-acetyl-5-methoxytryptamine). The sequence is that of Acetylserotonin O-methyltransferase 2 from Oryza sativa subsp. japonica (Rice).